Reading from the N-terminus, the 181-residue chain is Inner membrane-spanning protein YciB (181 aa).

5 consecutive transmembrane segments (helical) span residues 10-30 (LVIF…GALI), 50-70 (MHLI…VFHD), 72-92 (AFIK…LGVS), 118-138 (VTWY…YVAF), and 148-168 (FKVF…VFYL).

This sequence belongs to the YciB family.

The protein localises to the cell inner membrane. Its function is as follows. Plays a role in cell envelope biogenesis, maintenance of cell envelope integrity and membrane homeostasis. The chain is Inner membrane-spanning protein YciB from Shewanella oneidensis (strain ATCC 700550 / JCM 31522 / CIP 106686 / LMG 19005 / NCIMB 14063 / MR-1).